Here is a 300-residue protein sequence, read N- to C-terminus: Ubiquinone biosynthesis protein COQ4, mitochondrial (300 aa).

Positions 173, 174, 177, and 189 each coordinate Zn(2+).

It belongs to the COQ4 family. Component of a multi-subunit COQ enzyme complex, composed of at least COQ3, COQ4, COQ5, COQ6, COQ7 and COQ9. The cofactor is Zn(2+).

Its subcellular location is the mitochondrion inner membrane. The catalysed reaction is a 4-hydroxy-3-methoxy-5-(all-trans-polyprenyl)benzoate + H(+) = a 2-methoxy-6-(all-trans-polyprenyl)phenol + CO2. The protein operates within cofactor biosynthesis; ubiquinone biosynthesis. Its function is as follows. Lyase that catalyzes the C1-decarboxylation of 4-hydroxy-3-methoxy-5-(all-trans-polyprenyl)benzoic acid into 2-methoxy-6-(all-trans-polyprenyl)phenol during ubiquinone biosynthesis. This chain is Ubiquinone biosynthesis protein COQ4, mitochondrial, found in Cryptococcus neoformans var. neoformans serotype D (strain JEC21 / ATCC MYA-565) (Filobasidiella neoformans).